The chain runs to 67 residues: ATP synthase F(0) complex subunit 8 (67 aa).

Residues 8 to 24 (TWFITIVSMLLSLFILM) traverse the membrane as a helical segment. An N6-acetyllysine; alternate modification is found at Lys54. N6-succinyllysine; alternate is present on Lys54. An N6-acetyllysine modification is found at Lys57.

It belongs to the ATPase protein 8 family. As to quaternary structure, component of the ATP synthase complex composed at least of ATP5F1A/subunit alpha, ATP5F1B/subunit beta, ATP5MC1/subunit c (homooctomer), MT-ATP6/subunit a, MT-ATP8/subunit 8, ATP5ME/subunit e, ATP5MF/subunit f, ATP5MG/subunit g, ATP5MK/subunit k, ATP5MJ/subunit j, ATP5F1C/subunit gamma, ATP5F1D/subunit delta, ATP5F1E/subunit epsilon, ATP5PF/subunit F6, ATP5PB/subunit b, ATP5PD/subunit d, ATP5PO/subunit OSCP. ATP synthase complex consists of a soluble F(1) head domain (subunits alpha(3) and beta(3)) - the catalytic core - and a membrane F(0) domain - the membrane proton channel (subunits c, a, 8, e, f, g, k and j). These two domains are linked by a central stalk (subunits gamma, delta, and epsilon) rotating inside the F1 region and a stationary peripheral stalk (subunits F6, b, d, and OSCP). Interacts with PRICKLE3.

The protein localises to the mitochondrion membrane. Functionally, subunit 8, of the mitochondrial membrane ATP synthase complex (F(1)F(0) ATP synthase or Complex V) that produces ATP from ADP in the presence of a proton gradient across the membrane which is generated by electron transport complexes of the respiratory chain. ATP synthase complex consist of a soluble F(1) head domain - the catalytic core - and a membrane F(1) domain - the membrane proton channel. These two domains are linked by a central stalk rotating inside the F(1) region and a stationary peripheral stalk. During catalysis, ATP synthesis in the catalytic domain of F(1) is coupled via a rotary mechanism of the central stalk subunits to proton translocation. In vivo, can only synthesize ATP although its ATP hydrolase activity can be activated artificially in vitro. Part of the complex F(0) domain. In Dasypus novemcinctus (Nine-banded armadillo), this protein is ATP synthase F(0) complex subunit 8.